The sequence spans 459 residues: Ceramide glucosyltransferase 3 (459 aa).

The chain crosses the membrane as a helical span at residues 77-97 (LIAIVGFVFVFCLYLIHIIAL). A short sequence motif (D1) is located at residue D156. A short sequence motif (D2) is located at residue D208. Residue D302 is a short sequence motif, D3. Residue D302 is the Proton acceptor of the active site. The short motif at 338-342 (RICRW) is the (Q/R)XXRW element. Helical transmembrane passes span 367–387 (LIMAFSLNHLVGLNIMPILIL) and 415–435 (FMLIWLLRELTAPFVFIKALL).

The protein belongs to the glycosyltransferase 2 family. In terms of tissue distribution, expressed in pharyngeal intestinal valve, intestinal rectal valve and hypodermis.

Its subcellular location is the membrane. The enzyme catalyses an N-acylsphing-4-enine + UDP-alpha-D-glucose = a beta-D-glucosyl-(1&lt;-&gt;1')-N-acylsphing-4-enine + UDP + H(+). It catalyses the reaction an N-acyl-15-methylhexadecasphing-4-enine + UDP-alpha-D-glucose = an N-acyl-1-beta-D-glucosyl-15-methylhexadecasphing-4-enine + UDP + H(+). It participates in lipid metabolism; sphingolipid metabolism. In terms of biological role, catalyzes the first glycosylation step in glycosphingolipid biosynthesis, the transfer of glucose to ceramide to produce glucosylceramides (GlcCer). GlcCer are known to contribute to the physical properties and physiological functions of membranes and may regulate signal transduction. Seems to be the major active form in the nematode. Only branched-chain sphingoid bases like 15-methylhexadecasphing-4-enine are used for generating complex sphingolipids in Caenorhabditis elegans. Together with cgt-1, plays a role in the trafficking of proteins such as mig-14 to the cell membrane in intestinal cells. The polypeptide is Ceramide glucosyltransferase 3 (Caenorhabditis elegans).